A 418-amino-acid polypeptide reads, in one-letter code: Inner capsid protein sigma-2 (418 aa).

Belongs to the orthoreovirus sigma-1 protein family. As to quaternary structure, interacts with protein mu-NS; in viral inclusions.

It localises to the virion. Its function is as follows. Inner capsid (core) component. The sequence is that of Inner capsid protein sigma-2 (S2) from Mammalia (T1L).